A 551-amino-acid polypeptide reads, in one-letter code: Palmdelphin (551 aa).

At Met1 the chain carries N-acetylmethionine. The stretch at 12–106 (QAITDKRKIQ…LQISANEEVI (95 aa)) forms a coiled coil. Residue Lys125 forms a Glycyl lysine isopeptide (Lys-Gly) (interchain with G-Cter in SUMO2) linkage. Ser135 and Ser163 each carry phosphoserine. Lys178 is covalently cross-linked (Glycyl lysine isopeptide (Lys-Gly) (interchain with G-Cter in SUMO1); alternate). Lys178 is covalently cross-linked (Glycyl lysine isopeptide (Lys-Gly) (interchain with G-Cter in SUMO2); alternate). Positions 247–258 (ERNSKSPTEYHE) are enriched in basic and acidic residues. The disordered stretch occupies residues 247-267 (ERNSKSPTEYHEPVYANPFCR). Thr270 is modified (phosphothreonine). Disordered stretches follow at residues 298-387 (HESE…CSSP) and 452-536 (EDDE…DPSL). Phosphoserine occurs at positions 322, 350, 371, 376, 385, and 386. The span at 484–495 (KRSEVSPHENTN) shows a compositional bias: basic and acidic residues. Ser498, Ser515, and Ser520 each carry phosphoserine.

This sequence belongs to the paralemmin family. In terms of assembly, interacts with GLUL. Phosphorylated. As to expression, expressed in the brain and the spinal cord. Expressed in the anterior olfactory nucleus, the olfactory tubercle, the nucleus supraopticus, the nucleus of the lateral olfactory tract, the piriform cortex, the cortico-amygdaloid transition zone, the septofimbrial nucleus and the indusium griseum (at protein level).

It localises to the cytoplasm. The protein resides in the cell projection. The protein localises to the dendrite. Its subcellular location is the dendritic spine. The polypeptide is Palmdelphin (Palmd) (Rattus norvegicus (Rat)).